The sequence spans 258 residues: Acetylglutamate kinase (258 aa).

Substrate-binding positions include 44–45, Arg-66, and Asn-158; that span reads GG. Residues 181 to 186 and 209 to 211 contribute to the ATP site; these read DVSGIL and IIT.

The protein belongs to the acetylglutamate kinase family. ArgB subfamily. Homodimer.

The protein resides in the cytoplasm. It catalyses the reaction N-acetyl-L-glutamate + ATP = N-acetyl-L-glutamyl 5-phosphate + ADP. Its pathway is amino-acid biosynthesis; L-arginine biosynthesis; N(2)-acetyl-L-ornithine from L-glutamate: step 2/4. Its function is as follows. Catalyzes the ATP-dependent phosphorylation of N-acetyl-L-glutamate. The polypeptide is Acetylglutamate kinase (Escherichia coli O6:K15:H31 (strain 536 / UPEC)).